A 153-amino-acid chain; its full sequence is Ribosome maturation factor RimP (153 aa).

It belongs to the RimP family.

It is found in the cytoplasm. In terms of biological role, required for maturation of 30S ribosomal subunits. The sequence is that of Ribosome maturation factor RimP from Coxiella burnetii (strain CbuG_Q212) (Coxiella burnetii (strain Q212)).